The chain runs to 329 residues: Glycerol-3-phosphate dehydrogenase [NAD(P)+] (329 aa).

Positions 11, 30, and 103 each coordinate NADPH. Positions 103, 132, and 134 each coordinate sn-glycerol 3-phosphate. Ala136 contributes to the NADPH binding site. The sn-glycerol 3-phosphate site is built by Lys187, Asp240, Ser250, Arg251, and Asn252. Lys187 functions as the Proton acceptor in the catalytic mechanism. An NADPH-binding site is contributed by Arg251. Residues Val275 and Glu277 each contribute to the NADPH site.

The protein belongs to the NAD-dependent glycerol-3-phosphate dehydrogenase family.

It localises to the cytoplasm. The catalysed reaction is sn-glycerol 3-phosphate + NAD(+) = dihydroxyacetone phosphate + NADH + H(+). It catalyses the reaction sn-glycerol 3-phosphate + NADP(+) = dihydroxyacetone phosphate + NADPH + H(+). Its pathway is membrane lipid metabolism; glycerophospholipid metabolism. Catalyzes the reduction of the glycolytic intermediate dihydroxyacetone phosphate (DHAP) to sn-glycerol 3-phosphate (G3P), the key precursor for phospholipid synthesis. The polypeptide is Glycerol-3-phosphate dehydrogenase [NAD(P)+] (Methylobacillus flagellatus (strain ATCC 51484 / DSM 6875 / VKM B-1610 / KT)).